The sequence spans 177 residues: Protein OPG036 (177 aa).

It belongs to the poxviridae OPG036 family.

Its subcellular location is the host nucleus. Functionally, plays a role in the inhibition of host innate immune response. Within the host nucleus, inhibits activation of interferon-beta promoter by inhibiting IRF3 activation. The protein is Protein OPG036 (OPG036) of Homo sapiens (Human).